The chain runs to 220 residues: Ras-related protein Rab-3A (220 aa).

Serine 31, serine 32, valine 33, glycine 34, lysine 35, threonine 36, serine 37, threonine 48, proline 49, serine 53, and threonine 54 together coordinate GTP. Mg(2+) is bound at residue threonine 36. A Switch 1 motif is present at residues 49–58; that stretch reads PAFVSTVGID. 2 residues coordinate Mg(2+): threonine 54 and aspartate 77. Glycine 80 provides a ligand contact to GTP. Positions 80 to 96 match the Switch 2 motif; the sequence is GQERYRTITTAYYRGAM. Threonine 86 bears the Phosphothreonine mark. GTP is bound by residues asparagine 135, lysine 136, aspartate 138, alanine 166, and lysine 167. Residues serine 188 and serine 190 each carry the phosphoserine modification. A disordered region spans residues 194–220; sequence ADPAVTGAKQGPQLTDQQAPPHQDCAC. 2 S-geranylgeranyl cysteine lipidation sites follow: cysteine 218 and cysteine 220. Position 220 is a cysteine methyl ester (cysteine 220).

The protein belongs to the small GTPase superfamily. Rab family. In terms of assembly, interacts with RIMS1 and RIMS2. Interacts with Rabphilin-3A/RPH3A and Rab effector Noc2/RPH3AL. Interacts with SYTL4. Interacts with RAB3IP. Interacts with SGSM1 and SGSM3. Interacts with SYT1. Interacts with MYH9; this interaction is essential for lysosome exocytosis and plasma membrane repair. Interacts with STXBP1; this interaction promotes RAB3A dissociation from the vesicle membrane. Interacts with SNCA. Interacts with GDI1, GDI2, CHM and CHML; phosphorylation at Thr-86 disrupts these interactions. Interacts with MADD (via uDENN domain); the GTP-bound form is preferred for interaction. Mg(2+) serves as cofactor. In terms of processing, phosphorylation of Thr-86 in the switch II region by LRRK2 prevents the association of RAB regulatory proteins, including CHM, CHML and RAB GDP dissociation inhibitors GDI1 and GDI2. In terms of tissue distribution, specifically expressed in brain.

It is found in the cytoplasm. It localises to the cytosol. The protein localises to the lysosome. Its subcellular location is the cytoplasmic vesicle. The protein resides in the secretory vesicle. It is found in the cell projection. It localises to the axon. The protein localises to the cell membrane. Its subcellular location is the presynapse. The protein resides in the postsynapse. The enzyme catalyses GTP + H2O = GDP + phosphate + H(+). Its activity is regulated as follows. Regulated by guanine nucleotide exchange factors (GEFs) including RAB3IL1 and MADD which promote the exchange of bound GDP for free GTP. Regulated by GTPase activating proteins (GAPs) including RAB3GAP1 and TBC1D10B which increase the GTP hydrolysis activity. Inhibited by GDP dissociation inhibitors (GDIs) which prevent Rab-GDP dissociation. Its function is as follows. The small GTPases Rab are key regulators of intracellular membrane trafficking, from the formation of transport vesicles to their fusion with membranes. Rabs cycle between an inactive GDP-bound form and an active GTP-bound form that is able to recruit to membranes different sets of downstream effectors directly responsible for vesicle formation, movement, tethering and fusion. RAB3A plays a central role in regulated exocytosis and secretion. Controls the recruitment, tethering and docking of secretory vesicles to the plasma membrane. Upon stimulation, switches to its active GTP-bound form, cycles to vesicles and recruits effectors such as RIMS1, RIMS2, Rabphilin-3A/RPH3A, RPH3AL or SYTL4 to help the docking of vesicules onto the plasma membrane. Upon GTP hydrolysis by GTPase-activating protein, dissociates from the vesicle membrane allowing the exocytosis to proceed. Stimulates insulin secretion through interaction with RIMS2 or RPH3AL effectors in pancreatic beta cells. Regulates calcium-dependent lysosome exocytosis and plasma membrane repair (PMR) via the interaction with 2 effectors, SYTL4 and myosin-9/MYH9. Acts as a positive regulator of acrosome content secretion in sperm cells by interacting with RIMS1. Also plays a role in the regulation of dopamine release by interacting with synaptotagmin I/SYT. The protein is Ras-related protein Rab-3A (RAB3A) of Bos taurus (Bovine).